The following is a 343-amino-acid chain: Putative adenosine/adenine deaminase (343 aa).

Zn(2+) contacts are provided by His16, His18, and His204. His18 serves as a coordination point for substrate. Glu207 acts as the Proton donor in catalysis. Asp285 serves as a coordination point for Zn(2+). Asp286 contributes to the substrate binding site.

Belongs to the metallo-dependent hydrolases superfamily. Adenosine and AMP deaminases family. The cofactor is Zn(2+).

Its function is as follows. Putative nucleoside deaminase. May catalyze the hydrolytic deamination of adenosine or some similar substrate and play a role in purine metabolism. This chain is Putative adenosine/adenine deaminase, found in Streptomyces coelicolor (strain ATCC BAA-471 / A3(2) / M145).